The primary structure comprises 297 residues: Cyclin-dependent kinase 1 (297 aa).

In terms of domain architecture, Protein kinase spans 4-293 (YQKVEKIGEG…AKRALQQNYL (290 aa)). ATP is bound by residues 10–18 (IGEGTYGVV) and lysine 33. At threonine 14 the chain carries Phosphothreonine. The residue at position 15 (tyrosine 15) is a Phosphotyrosine. Catalysis depends on aspartate 134, which acts as the Proton acceptor. Phosphothreonine is present on threonine 167.

It belongs to the protein kinase superfamily. CMGC Ser/Thr protein kinase family. CDC2/CDKX subfamily. Forms a stable but non-covalent complex with regulatory subunit suc1 and with a cyclin. Interacts with cyclin cdc13. Interacts with cyclin cig2. Interacts with cdc37.

It localises to the cytoplasm. The enzyme catalyses L-seryl-[protein] + ATP = O-phospho-L-seryl-[protein] + ADP + H(+). The catalysed reaction is L-threonyl-[protein] + ATP = O-phospho-L-threonyl-[protein] + ADP + H(+). Phosphorylation at Thr-14 or Tyr-15 inactivates the enzyme, while phosphorylation at Thr-167 activates it. Its function is as follows. Cyclin-dependent kinase that acts as a master regulator of the mitotic and meiotic cell cycles. Required to drive the G1-S and G2-M transitions, and initiation of premeiotic DNA replication and meiosis II. More than 200 substrates have been identified. Substrate specificity is in part regulated by the bound cyclin protein. When complexed with cyclin cig2, it drives the G1-S phase transition. When complexed with cyclin cdc13, it drives the G2-M transition and initiation of meiosis II. Its activity rises throughout the cell cycle and substrate specificity is further influenced by activity thresholds with more sensitive substrates phosphorylated earlier in the cell cycle than less sensitive substrates. Phosphorylates dis1 during metaphase to ensure proper microtubule dynamics and accurate chromosome segregation. Phosphorylates the repetitive C-terminus of the large subunit of RNA polymerase II rpb1. Inactivated by checkpoint signaling following detection of cellular damage, leading to cell cycle arrest to allow damage repair. Inactivated during G2 DNA damage checkpoint signaling. Inactivated in response to defective RNA splicing. In Schizosaccharomyces pombe (strain 972 / ATCC 24843) (Fission yeast), this protein is Cyclin-dependent kinase 1.